The sequence spans 162 residues: MVYTEENIRELILRVLAPPLALFSLQVQNRKNHALIEIELDHLTDKTGSASLEDCETVSRRLKEELDQWGEEFDFTLQVSSAGAERVLRLPEDLIRFQGLLVKLEVPLESGKWDKRLYRLGPVSGDSVELTLYDRKTRHKKNQKSVSMPIAEIRKGNLYLEI.

This sequence belongs to the RimP family.

Its subcellular location is the cytoplasm. Required for maturation of 30S ribosomal subunits. The chain is Ribosome maturation factor RimP from Leptospira biflexa serovar Patoc (strain Patoc 1 / Ames).